A 365-amino-acid chain; its full sequence is Putative F-box protein At1g31000 (365 aa).

In terms of domain architecture, F-box spans 15–62 (NDSDSVRIDIVIEIVKRLPLKDVSRFLLVSKLWSEIIRSPYFIRSFPF).

The polypeptide is Putative F-box protein At1g31000 (Arabidopsis thaliana (Mouse-ear cress)).